The primary structure comprises 79 residues: D-alanyl carrier protein (79 aa).

In terms of domain architecture, Carrier spans 1–77 (MDTKQGVLDI…KIVAKVESLE (77 aa)). An O-(pantetheine 4'-phosphoryl)serine modification is found at S35.

The protein belongs to the DltC family. Post-translationally, 4'-phosphopantetheine is transferred from CoA to a specific serine of apo-DCP.

The protein localises to the cytoplasm. Its pathway is cell wall biogenesis; lipoteichoic acid biosynthesis. Carrier protein involved in the D-alanylation of lipoteichoic acid (LTA). The loading of thioester-linked D-alanine onto DltC is catalyzed by D-alanine--D-alanyl carrier protein ligase DltA. The DltC-carried D-alanyl group is further transferred to cell membrane phosphatidylglycerol (PG) by forming an ester bond, probably catalyzed by DltD. D-alanylation of LTA plays an important role in modulating the properties of the cell wall in Gram-positive bacteria, influencing the net charge of the cell wall. The protein is D-alanyl carrier protein of Lactobacillus acidophilus (strain ATCC 700396 / NCK56 / N2 / NCFM).